The following is a 90-amino-acid chain: N(2)-fixation sustaining protein CowN (90 aa).

This sequence belongs to the CowN family.

In terms of biological role, is required to sustain N(2)-dependent growth in the presence of low levels of carbon monoxide (CO). Probably acts by protecting the N(2) fixation ability of the nitrogenase complex, which is inactivated in the presence of CO. This chain is N(2)-fixation sustaining protein CowN, found in Methylocella silvestris (strain DSM 15510 / CIP 108128 / LMG 27833 / NCIMB 13906 / BL2).